A 316-amino-acid polypeptide reads, in one-letter code: Beta-ketoacyl-[acyl-carrier-protein] synthase III 4 (316 aa).

Active-site residues include cysteine 114 and histidine 242. The segment at 243–247 is ACP-binding; it reads QANLR. The active site involves asparagine 272.

This sequence belongs to the thiolase-like superfamily. FabH family. As to quaternary structure, homodimer.

The protein resides in the cytoplasm. The catalysed reaction is malonyl-[ACP] + acetyl-CoA + H(+) = 3-oxobutanoyl-[ACP] + CO2 + CoA. The protein operates within lipid metabolism; fatty acid biosynthesis. In terms of biological role, catalyzes the condensation reaction of fatty acid synthesis by the addition to an acyl acceptor of two carbons from malonyl-ACP. Catalyzes the first condensation reaction which initiates fatty acid synthesis and may therefore play a role in governing the total rate of fatty acid production. Possesses both acetoacetyl-ACP synthase and acetyl transacylase activities. Its substrate specificity determines the biosynthesis of branched-chain and/or straight-chain of fatty acids. This is Beta-ketoacyl-[acyl-carrier-protein] synthase III 4 from Streptomyces coelicolor (strain ATCC BAA-471 / A3(2) / M145).